The chain runs to 887 residues: Pyruvate dehydrogenase E1 component (887 aa).

Mg(2+)-binding residues include D231, N261, and Q263. N6-acetyllysine is present on K716.

As to quaternary structure, homodimer. Part of the PDH complex, consisting of multiple copies of pyruvate dehydrogenase (E1), dihydrolipoamide acetyltransferase (E2) and lipoamide dehydrogenase (E3). The cofactor is Mg(2+). It depends on thiamine diphosphate as a cofactor.

It carries out the reaction N(6)-[(R)-lipoyl]-L-lysyl-[protein] + pyruvate + H(+) = N(6)-[(R)-S(8)-acetyldihydrolipoyl]-L-lysyl-[protein] + CO2. In terms of biological role, component of the pyruvate dehydrogenase (PDH) complex, that catalyzes the overall conversion of pyruvate to acetyl-CoA and CO(2). This Escherichia coli O157:H7 protein is Pyruvate dehydrogenase E1 component (aceE).